Reading from the N-terminus, the 261-residue chain is Imidazole glycerol phosphate synthase subunit HisF (261 aa).

Active-site residues include Asp-12 and Asp-131.

It belongs to the HisA/HisF family. Heterodimer of HisH and HisF.

It is found in the cytoplasm. The catalysed reaction is 5-[(5-phospho-1-deoxy-D-ribulos-1-ylimino)methylamino]-1-(5-phospho-beta-D-ribosyl)imidazole-4-carboxamide + L-glutamine = D-erythro-1-(imidazol-4-yl)glycerol 3-phosphate + 5-amino-1-(5-phospho-beta-D-ribosyl)imidazole-4-carboxamide + L-glutamate + H(+). The protein operates within amino-acid biosynthesis; L-histidine biosynthesis; L-histidine from 5-phospho-alpha-D-ribose 1-diphosphate: step 5/9. Its function is as follows. IGPS catalyzes the conversion of PRFAR and glutamine to IGP, AICAR and glutamate. The HisF subunit catalyzes the cyclization activity that produces IGP and AICAR from PRFAR using the ammonia provided by the HisH subunit. This is Imidazole glycerol phosphate synthase subunit HisF from Brucella melitensis biotype 2 (strain ATCC 23457).